The chain runs to 138 residues: 1,4-dihydroxy-2-naphthoyl-CoA hydrolase (138 aa).

Aspartate 13 is a catalytic residue.

It belongs to the 4-hydroxybenzoyl-CoA thioesterase family. DHNA-CoA hydrolase subfamily.

It carries out the reaction 1,4-dihydroxy-2-naphthoyl-CoA + H2O = 1,4-dihydroxy-2-naphthoate + CoA + H(+). It functions in the pathway cofactor biosynthesis; phylloquinone biosynthesis. The protein operates within quinol/quinone metabolism; 1,4-dihydroxy-2-naphthoate biosynthesis; 1,4-dihydroxy-2-naphthoate from chorismate: step 7/7. Catalyzes the hydrolysis of 1,4-dihydroxy-2-naphthoyl-CoA (DHNA-CoA) to 1,4-dihydroxy-2-naphthoate (DHNA), a reaction involved in phylloquinone (vitamin K1) biosynthesis. The polypeptide is 1,4-dihydroxy-2-naphthoyl-CoA hydrolase (Microcystis aeruginosa (strain NIES-843 / IAM M-2473)).